The chain runs to 533 residues: Probable dolichyl pyrophosphate Man9GlcNAc2 alpha-1,3-glucosyltransferase (533 aa).

The tract at residues 1–20 (MPKKKPAKHSGEDDITIPVS) is disordered. A run of 9 helical transmembrane segments spans residues 42–64 (FLCI…YSGA), 149–169 (WTVL…FVLV), 184–204 (WHIA…GHFQ), 214–234 (VGAI…LFSL), 264–284 (ILSV…FWWP), 360–380 (GFLY…FQVH), 422–442 (LLIP…SPGN), 463–483 (VFLL…YLTI), and 491–511 (FLFE…FAFY).

The protein belongs to the ALG6/ALG8 glucosyltransferase family.

It is found in the endoplasmic reticulum membrane. It catalyses the reaction an alpha-D-Man-(1-&gt;2)-alpha-D-Man-(1-&gt;2)-alpha-D-Man-(1-&gt;3)-[alpha-D-Man-(1-&gt;2)-alpha-D-Man-(1-&gt;3)-[alpha-D-Man-(1-&gt;2)-alpha-D-Man-(1-&gt;6)]-alpha-D-Man-(1-&gt;6)]-beta-D-Man-(1-&gt;4)-beta-D-GlcNAc-(1-&gt;4)-alpha-D-GlcNAc-diphospho-di-trans,poly-cis-dolichol + a di-trans,poly-cis-dolichyl beta-D-glucosyl phosphate = an alpha-D-Glc-(1-&gt;3)-alpha-D-Man-(1-&gt;2)-alpha-D-Man-(1-&gt;2)-alpha-D-Man-(1-&gt;3)-[alpha-D-Man-(1-&gt;2)-alpha-D-Man-(1-&gt;3)-[alpha-D-Man-(1-&gt;2)-alpha-D-Man-(1-&gt;6)]-alpha-D-Man-(1-&gt;6)]-beta-D-Man-(1-&gt;4)-beta-D-GlcNAc-(1-&gt;4)-alpha-D-GlcNAc-diphospho-di-trans,poly-cis-dolichol + a di-trans,poly-cis-dolichyl phosphate + H(+). Its pathway is protein modification; protein glycosylation. In terms of biological role, adds the first glucose residue to the lipid-linked oligosaccharide precursor for N-linked glycosylation. Transfers glucose from dolichyl phosphate glucose (Dol-P-Glc) onto the lipid-linked oligosaccharide Man(9)GlcNAc(2)-PP-Dol. In Arabidopsis thaliana (Mouse-ear cress), this protein is Probable dolichyl pyrophosphate Man9GlcNAc2 alpha-1,3-glucosyltransferase.